Here is a 177-residue protein sequence, read N- to C-terminus: Large ribosomal subunit protein uL6 (177 aa).

Belongs to the universal ribosomal protein uL6 family. In terms of assembly, part of the 50S ribosomal subunit.

Functionally, this protein binds to the 23S rRNA, and is important in its secondary structure. It is located near the subunit interface in the base of the L7/L12 stalk, and near the tRNA binding site of the peptidyltransferase center. In Hahella chejuensis (strain KCTC 2396), this protein is Large ribosomal subunit protein uL6.